The sequence spans 304 residues: NAD kinase (304 aa).

Residue D77 is the Proton acceptor of the active site. Residues 77 to 78 (DG), R82, 151 to 152 (NE), R162, D181, and 192 to 197 (TAYSFS) contribute to the NAD(+) site.

It belongs to the NAD kinase family. It depends on a divalent metal cation as a cofactor.

Its subcellular location is the cytoplasm. The catalysed reaction is NAD(+) + ATP = ADP + NADP(+) + H(+). Its function is as follows. Involved in the regulation of the intracellular balance of NAD and NADP, and is a key enzyme in the biosynthesis of NADP. Catalyzes specifically the phosphorylation on 2'-hydroxyl of the adenosine moiety of NAD to yield NADP. The sequence is that of NAD kinase from Leifsonia xyli subsp. xyli (strain CTCB07).